Consider the following 256-residue polypeptide: Acetyl-coenzyme A carboxylase carboxyl transferase subunit alpha (256 aa).

The 236-residue stretch at 1–236 folds into the CoA carboxyltransferase C-terminal domain; sequence MTDVSRVLKE…KANLIEQITS (236 aa).

This sequence belongs to the AccA family. As to quaternary structure, acetyl-CoA carboxylase is a heterohexamer composed of biotin carboxyl carrier protein (AccB), biotin carboxylase (AccC) and two subunits each of ACCase subunit alpha (AccA) and ACCase subunit beta (AccD).

It localises to the cytoplasm. It carries out the reaction N(6)-carboxybiotinyl-L-lysyl-[protein] + acetyl-CoA = N(6)-biotinyl-L-lysyl-[protein] + malonyl-CoA. Its pathway is lipid metabolism; malonyl-CoA biosynthesis; malonyl-CoA from acetyl-CoA: step 1/1. In terms of biological role, component of the acetyl coenzyme A carboxylase (ACC) complex. First, biotin carboxylase catalyzes the carboxylation of biotin on its carrier protein (BCCP) and then the CO(2) group is transferred by the carboxyltransferase to acetyl-CoA to form malonyl-CoA. The sequence is that of Acetyl-coenzyme A carboxylase carboxyl transferase subunit alpha from Streptococcus pyogenes serotype M12 (strain MGAS2096).